The primary structure comprises 242 residues: Sensory transduction protein LytT (242 aa).

The Response regulatory domain occupies 2–116 (HVLIVDDEPL…KITQVIEKAS (115 aa)). The HTH LytTR-type domain occupies 137 to 241 (IPIQGEDRIY…VKEFKEKLGL (105 aa)).

Phosphorylated by LytS.

The protein resides in the cytoplasm. Its function is as follows. Member of the two-component regulatory system LytS/LytT that probably regulates genes involved in cell wall metabolism. The protein is Sensory transduction protein LytT (lytT) of Enterococcus faecalis (strain ATCC 700802 / V583).